Reading from the N-terminus, the 364-residue chain is O-methyltransferase 1 (364 aa).

S-adenosyl-L-homocysteine is bound by residues Ser183, Gly207, Asp230, Asp250, and Lys264. Asp230 contributes to the S-adenosyl-L-methionine binding site. The active-site Proton acceptor is the His268.

The protein belongs to the class I-like SAM-binding methyltransferase superfamily. Cation-independent O-methyltransferase family. In terms of assembly, homodimer.

It catalyses the reaction dopamine + S-adenosyl-L-methionine = 3-methoxytyramine + S-adenosyl-L-homocysteine + H(+). The enzyme catalyses 3,4-dihydroxy-5-methoxyphenethylamine + S-adenosyl-L-methionine = 4-hydroxy-3,5-dimethoxyphenethylamine + S-adenosyl-L-homocysteine + H(+). Its pathway is aromatic compound metabolism. The protein operates within alkaloid biosynthesis. Functionally, O-methyltransferase participating in the biosynthesis of natural products derived from phenylethylamine, including mescaline, a natural hallucinogen potentially used in psychotherapeutic treatments. Catalyzes the O-methylation of mescaline meta hydroxyl groups, using dopamine and 3,4-dihydroxy-5-methoxyphenethylamine as substrates. This is O-methyltransferase 1 from Lophophora williamsii (Peyote).